The primary structure comprises 616 residues: Chaperone protein DnaK (616 aa).

Thr175 is subject to Phosphothreonine; by autocatalysis. Residues 579–605 (GGDPSQAGGFDPNAAGGAQQAPHDDNV) are disordered.

This sequence belongs to the heat shock protein 70 family.

Functionally, acts as a chaperone. The polypeptide is Chaperone protein DnaK (Clostridium botulinum (strain Alaska E43 / Type E3)).